The sequence spans 150 residues: UPF0178 protein ASA_3749 (150 aa).

The protein belongs to the UPF0178 family.

This is UPF0178 protein ASA_3749 from Aeromonas salmonicida (strain A449).